The chain runs to 92 residues: Exodeoxyribonuclease 7 small subunit (92 aa).

The interval 1–22 (MPKKNAISESTNSTPETAPAMT) is disordered. The segment covering 7–16 (ISESTNSTPE) has biased composition (polar residues).

The protein belongs to the XseB family. Heterooligomer composed of large and small subunits.

Its subcellular location is the cytoplasm. It carries out the reaction Exonucleolytic cleavage in either 5'- to 3'- or 3'- to 5'-direction to yield nucleoside 5'-phosphates.. In terms of biological role, bidirectionally degrades single-stranded DNA into large acid-insoluble oligonucleotides, which are then degraded further into small acid-soluble oligonucleotides. The polypeptide is Exodeoxyribonuclease 7 small subunit (Photorhabdus laumondii subsp. laumondii (strain DSM 15139 / CIP 105565 / TT01) (Photorhabdus luminescens subsp. laumondii)).